The following is a 622-amino-acid chain: FERM domain-containing protein 6 (622 aa).

An FERM domain is found at 16–328; sequence RRVCIFLPND…NSHRLYMNLQ (313 aa). The segment at 357–452 is disordered; it reads LDMDPLEKRS…KDRLEEDSQD (96 aa). Low complexity-rich tracts occupy residues 384–395 and 425–438; these read HSTASHSSSHTS and SSMT…TSGV. Ser522 carries the post-translational modification Phosphoserine. Position 523 is a phosphothreonine (Thr523). Ser525, Ser542, and Ser544 each carry phosphoserine.

The protein resides in the cytoplasm. Its subcellular location is the cell membrane. The polypeptide is FERM domain-containing protein 6 (Frmd6) (Mus musculus (Mouse)).